A 931-amino-acid polypeptide reads, in one-letter code: Protocadherin gamma-A1 (931 aa).

The N-terminal stretch at 1–28 is a signal peptide; the sequence is MKIQKKLTGCSRLMLLCLSLELLLEAGA. 6 consecutive Cadherin domains span residues 29–133, 134–242, 243–347, 348–452, 453–562, and 570–682; these read GNIH…TPQF, QLEE…PPAF, TQAQ…APEV, TITS…SPVF, HQDS…APEI, and DGST…EPSA. The Extracellular segment spans residues 29–692; that stretch reads GNIHYSVPEE…KPNDSDLTLY (664 aa). Residues Asn-265, Asn-419, and Asn-545 are each glycosylated (N-linked (GlcNAc...) asparagine). The N-linked (GlcNAc...) asparagine glycan is linked to Asn-685. A helical membrane pass occupies residues 693–713; sequence LVVAAAAVSCVFLAFVIVLLA. At 714-931 the chain is on the cytoplasmic side; that stretch reads HRLRRWHKSR…KKKSGKKEKK (218 aa). Disordered regions lie at residues 801-840 and 901-931; these read KKEP…WPNN and ATLT…KEKK. A compositionally biased stretch (polar residues) spans 805 to 840; sequence FSQQAPPNTDWRFSQAQRPGTSGSQNGDDTGTWPNN. The span at 921 to 931 shows a compositional bias: basic residues; it reads NKKKSGKKEKK.

The protein resides in the cell membrane. In terms of biological role, potential calcium-dependent cell-adhesion protein. May be involved in the establishment and maintenance of specific neuronal connections in the brain. The protein is Protocadherin gamma-A1 (PCDHGA1) of Homo sapiens (Human).